We begin with the raw amino-acid sequence, 503 residues long: Putative ribose/galactose/methyl galactoside import ATP-binding protein (503 aa).

ABC transporter domains follow at residues 7–244 (LEMI…VGRE) and 254–498 (VPIG…TGQL). 39–46 (GENGAGKS) contributes to the ATP binding site.

It belongs to the ABC transporter superfamily. Carbohydrate importer 2 (CUT2) (TC 3.A.1.2) family.

Its subcellular location is the cell membrane. The enzyme catalyses D-ribose(out) + ATP + H2O = D-ribose(in) + ADP + phosphate + H(+). It catalyses the reaction D-galactose(out) + ATP + H2O = D-galactose(in) + ADP + phosphate + H(+). Part of an ABC transporter complex involved in carbohydrate import. Could be involved in ribose, galactose and/or methyl galactoside import. Responsible for energy coupling to the transport system. In Geobacillus kaustophilus (strain HTA426), this protein is Putative ribose/galactose/methyl galactoside import ATP-binding protein.